A 268-amino-acid polypeptide reads, in one-letter code: Phosphatidylglycerol--prolipoprotein diacylglyceryl transferase (268 aa).

4 consecutive transmembrane segments (helical) span residues 23–43, 58–78, 96–116, and 119–139; these read WYAL…LALA, FLTW…VLFY, GGMS…LFCW, and GLSP…GLFF. R141 contacts a 1,2-diacyl-sn-glycero-3-phospho-(1'-sn-glycerol). A run of 3 helical transmembrane segments spans residues 181 to 201, 206 to 226, and 238 to 258; these read SFLE…MPAV, GMTA…AEFF, and AGAT…VWLV.

The protein belongs to the Lgt family.

It is found in the cell inner membrane. It catalyses the reaction L-cysteinyl-[prolipoprotein] + a 1,2-diacyl-sn-glycero-3-phospho-(1'-sn-glycerol) = an S-1,2-diacyl-sn-glyceryl-L-cysteinyl-[prolipoprotein] + sn-glycerol 1-phosphate + H(+). It participates in protein modification; lipoprotein biosynthesis (diacylglyceryl transfer). Its function is as follows. Catalyzes the transfer of the diacylglyceryl group from phosphatidylglycerol to the sulfhydryl group of the N-terminal cysteine of a prolipoprotein, the first step in the formation of mature lipoproteins. The sequence is that of Phosphatidylglycerol--prolipoprotein diacylglyceryl transferase from Azospirillum brasilense.